The following is a 21-amino-acid chain: Ferredoxin (21 aa).

The 20-residue stretch at 2 to 21 (KVKVDADACIGCGVCVELCP) folds into the 4Fe-4S ferredoxin-type domain. [4Fe-4S] cluster is bound by residues cysteine 10, cysteine 13, and cysteine 16.

As to quaternary structure, monomer. [4Fe-4S] cluster serves as cofactor.

In terms of biological role, ferredoxins are iron-sulfur proteins that transfer electrons in a wide variety of metabolic reactions. This is Ferredoxin (fdxA) from Pyrococcus woesei.